Consider the following 695-residue polypeptide: Putative ATP-dependent RNA helicase L540 (695 aa).

Positions 53 to 219 (LSALENYQLV…FNSVDSTVID (167 aa)) constitute a Helicase ATP-binding domain. Position 66-73 (66-73 (SSTGSGKS)) interacts with ATP. The DEAH box motif lies at 164-167 (DEAH). One can recognise a Helicase C-terminal domain in the interval 247–434 (LIEDLIHQQI…GINMMNQLMD (188 aa)).

It belongs to the DEAD box helicase family. DEAH subfamily.

The protein localises to the virion. The catalysed reaction is ATP + H2O = ADP + phosphate + H(+). In Acanthamoeba polyphaga (Amoeba), this protein is Putative ATP-dependent RNA helicase L540.